Here is a 194-residue protein sequence, read N- to C-terminus: Flagellar transcriptional regulator FlhC (194 aa).

Positions 139, 142, 159, and 162 each coordinate Zn(2+).

The protein belongs to the FlhC family. In terms of assembly, heterohexamer composed of two FlhC and four FlhD subunits. Each FlhC binds a FlhD dimer, forming a heterotrimer, and a hexamer assembles by dimerization of two heterotrimers. The cofactor is Zn(2+).

The protein localises to the cytoplasm. Functions in complex with FlhD as a master transcriptional regulator that regulates transcription of several flagellar and non-flagellar operons by binding to their promoter region. Activates expression of class 2 flagellar genes, including fliA, which is a flagellum-specific sigma factor that turns on the class 3 genes. Also regulates genes whose products function in a variety of physiological pathways. The chain is Flagellar transcriptional regulator FlhC from Xenorhabdus nematophila (Achromobacter nematophilus).